The following is a 385-amino-acid chain: Hemagglutinin-esterase (385 aa).

Positions 1–11 are cleaved as a signal peptide; that stretch reads MLIIFLFFNFC. The tract at residues 1–121 is esterase domain 1; sequence MLIIFLFFNF…SNDVWIFNKV (121 aa). Topologically, residues 12-361 are virion surface; that stretch reads YGFNEPLNVV…LNCFYDPLPI (350 aa). The Nucleophile role is filled by serine 34. Cysteines 38 and 59 form a disulfide. N-linked (GlcNAc...) asparagine; by host glycans are attached at residues asparagine 83, asparagine 110, asparagine 145, asparagine 171, asparagine 196, and asparagine 251. Cysteines 107 and 155 form a disulfide. Residues 122 to 239 form a receptor binding region; that stretch reads RFYRALYSNM…GSYKIFSTGF (118 aa). 2 cysteine pairs are disulfide-bonded: cysteine 183–cysteine 249 and cysteine 191–cysteine 222. The tract at residues 240–352 is esterase domain 2; that stretch reads VLSIPTKALC…NCPTSAYIKL (113 aa). Cysteine 280 and cysteine 285 are oxidised to a cystine. The N-linked (GlcNAc...) asparagine; by host glycan is linked to asparagine 289. Residues aspartate 299 and histidine 302 each act as charge relay system in the active site. Cysteine 320 and cysteine 344 form a disulfide bridge. N-linked (GlcNAc...) asparagine; by host glycosylation occurs at asparagine 331. The helical transmembrane segment at 362–382 threads the bilayer; sequence ILQGILLFLALLFIVFLLFLV. Topologically, residues 383-385 are intravirion; it reads YHG.

Belongs to the influenza type C/coronaviruses hemagglutinin-esterase family. In terms of assembly, homodimer; disulfide-linked. Forms a complex with the M protein in the pre-Golgi. Associates then with S-M complex to form a ternary complex S-M-HE. Post-translationally, N-glycosylated in the host RER.

It localises to the virion membrane. Its subcellular location is the host cell membrane. It carries out the reaction N-acetyl-9-O-acetylneuraminate + H2O = N-acetylneuraminate + acetate + H(+). The enzyme catalyses N-acetyl-4-O-acetylneuraminate + H2O = N-acetylneuraminate + acetate + H(+). Structural protein that makes short spikes at the surface of the virus. Contains receptor binding and receptor-destroying activities. Mediates de-O-acetylation of N-acetyl-4-O-acetylneuraminic acid, which is probably the receptor determinant recognized by the virus on the surface of erythrocytes and susceptible cells. This receptor-destroying activity is important for virus release as it probably helps preventing self-aggregation and ensures the efficient spread of the progeny virus from cell to cell. May serve as a secondary viral attachment protein for initiating infection, the spike protein being the major one. May become a target for both the humoral and the cellular branches of the immune system. The sequence is that of Hemagglutinin-esterase from Human coronavirus HKU1 (isolate N2) (HCoV-HKU1).